Reading from the N-terminus, the 292-residue chain is Fat storage-inducing transmembrane protein 1 (292 aa).

The Lumenal segment spans residues 1–18 (MERGPVVGAGRGAGARIR). The chain crosses the membrane as a helical span at residues 19–39 (ALLGGLVRVLLWVASALLYFG). The Cytoplasmic portion of the chain corresponds to 40–54 (SEQAARLLGSPCLRR). Residues 55–75 (LYHAWLAAVVIFGPLLQFHVN) traverse the membrane as a helical segment. Residues 76 to 94 (PRTIFASHGNFFNIKFVNS) are Lumenal-facing. Residues 95-115 (AWGWTCTFLGGFVLLVVFLAT) form a helical membrane-spanning segment. Over 116–141 (RRVAVTARHLSRLVVGAAVWRGAGRA) the chain is Cytoplasmic. A helical membrane pass occupies residues 142–162 (FLLIEDLTGSCFEPLPQGLLL). Over 163-187 (HELPDRRSCLAAGHQWRGYTVSSHT) the chain is Lumenal. Histidine 186 is a catalytic residue. Residues 188-208 (FLLTFCCLLMAEEAAVFAKYL) traverse the membrane as a helical segment. The Cytoplasmic segment spans residues 209–220 (AHGLPAGAPLRL). The helical transmembrane segment at 221–241 (VFLLNVLLLGLWNFLLLCTVI) threads the bilayer. The Lumenal segment spans residues 242-249 (YFHQYTHK). The active site involves histidine 244. The chain crosses the membrane as a helical span at residues 250 to 270 (VVGAAVGTFAWYLTYGSWYHQ). Residues 271-292 (PWSPGSPGHGLFPRPHSIHKHN) are Cytoplasmic-facing.

This sequence belongs to the FIT family. FIT1 subfamily.

The protein localises to the endoplasmic reticulum membrane. Functionally, plays an important role in the formation of lipid droplets (LDs) which are storage organelles at the center of lipid and energy homeostasis. Directly binds to diacylglycerol (DAGs) and triacylglycerol. This Bos taurus (Bovine) protein is Fat storage-inducing transmembrane protein 1.